The following is a 5161-amino-acid chain: Nonribosomal peptide synthetase TES (5161 aa).

The adenylation 1 stretch occupies residues 37-436 (EEQAIARPNA…GRKDSQTKVR (400 aa)). Positions 569-645 (QPETEKEQIL…KLTSAAIPSV (77 aa)) constitute a Carrier 1 domain. An O-(pantetheine 4'-phosphoryl)serine modification is found at serine 606. A condensation 1 region spans residues 659–1098 (GHVAQSFAQG…LLCDVELSKL (440 aa)). An adenylation 2 region spans residues 1122-1522 (RQQTSLCPSR…GRMDGQVKIR (401 aa)). The interval 1630 to 1742 (MNEWLDDTID…YLFKTTQQLL (113 aa)) is methyltransferase (M) domain 1. One can recognise a Carrier 2 domain in the interval 2068 to 2141 (TRAESKIQQL…QLAAVAQEHV (74 aa)). Serine 2102 carries the O-(pantetheine 4'-phosphoryl)serine modification. The tract at residues 2179 to 2593 (EDIYPCSPLQ…MLTQDDEQQL (415 aa)) is condensation 2. The adenylation 3 stretch occupies residues 2614 to 3010 (DQAKSRPEAD…GRKDGQVKVR (397 aa)). The Carrier 3 domain maps to 3139-3215 (KPETKHEMAL…RLANRLVDPP (77 aa)). Residue serine 3176 is modified to O-(pantetheine 4'-phosphoryl)serine. Positions 3232–3668 (LQSFAQGRLW…VVPLMTVEAH (437 aa)) are condensation 3. Residues 3694–4098 (FRQQAAMQPS…GRIDGQVKIR (405 aa)) are adenylation 4. The segment at 4203–4329 (EMKEWLEETI…KVDGVKTLFF (127 aa)) is methyltransferase (M) domain 2. The Carrier 4 domain maps to 4643-4725 (RELSTAELKV…QFSQHEGEQK (83 aa)). An O-(pantetheine 4'-phosphoryl)serine modification is found at serine 4680. Residues 4785 to 5093 (FFLNLGTRVD…HQNLNEHPEF (309 aa)) form a condensation 4 region.

Belongs to the NRP synthetase family.

It functions in the pathway phytotoxin biosynthesis. Nonribosomal peptide synthetase; part of the gene cluster that mediates the biosynthesis of the phytotoxin tentoxin, an inhibitor the F1-ATPase activity of chloroplasts, resulting in chlorosis in sensitive plants. Tentoxin is a cyclic tetrapeptide that consists of four amino acid residues: glycine (Gly), alanine (Ala), leucine (Leu), and dehydrophenylalanine (DPhe). In addition, both the Ala and DPhe residues are N-methylated. The nonribosomal peptide synthetase TES assembles tentoxin from the four substrate amino acids. The adenylation domains of each of the 4 modules are responsible for the activation of Gly, Ala, Leu and DPhe, respectively. In addition, the N-methyltransferase domains in the second and fourth modules of TES could be responsible for N-methylation of Ala and DPhe residues. Finally, the condensation domain located in the termination module probably catalyzes the formation of the intramolecular macrocyclization and then the release of tentoxin. The cytochrome P450 monooxygenase TES1 is predicted to be involved in the formation of DPhe. The sequence is that of Nonribosomal peptide synthetase TES from Alternaria alternata (Alternaria rot fungus).